Consider the following 275-residue polypeptide: Multivesicular body subunit 12A (275 aa).

The 141-residue stretch at 5 to 145 folds into the MABP domain; it reads STPITGLAWI…GLVFWCRKGS (141 aa). Positions 151 to 156 match the SH3-binding motif; sequence PTPKPR. A UMA domain is found at 216 to 267; sequence IDGIPFTIHPMFENTINNSSVAASDFRDLHIKTLSEIESEYNYGFVVEKTAA.

Belongs to the MVB12 family. Component of the ESCRT-I complex (endosomal sorting complex required for transport I).

It localises to the cytoplasm. The protein resides in the endosome. Its subcellular location is the late endosome membrane. Functionally, component of the ESCRT-I complex, a regulator of vesicular trafficking process. Required for the sorting of endocytic ubiquitinated cargos into multivesicular bodies. The sequence is that of Multivesicular body subunit 12A (mvb12a) from Xenopus laevis (African clawed frog).